Here is a 483-residue protein sequence, read N- to C-terminus: Uridine/cytidine kinase UKL1, chloroplastic (483 aa).

The transit peptide at 1 to 47 directs the protein to the chloroplast; the sequence is MPEDSTAIDYVMEKASGPHFSGLRLDGLLSSPSKSSVSSPSHFRLSN. Residues 59–264 are uridine kinase; it reads PHQPFVIGVT…IVQHIHTKLG (206 aa). The interval 274 to 483 is uracil phosphoribosyltransferase; the sequence is NVFVIETTFQ…FGDRYFGTDE (210 aa). GTP contacts are provided by residues Lys298, Arg307, and 341 to 344; that span reads CKKL. The 5-phospho-alpha-D-ribose 1-diphosphate site is built by Arg351 and Arg376. Residue Arg396 participates in GTP binding. Residues Asp402, 407 to 410, and Glu473 contribute to the 5-phospho-alpha-D-ribose 1-diphosphate site; that span reads TGNS. Residue 472–474 participates in uracil binding; the sequence is GEF.

The protein in the N-terminal section; belongs to the uridine kinase family. In the C-terminal section; belongs to the UPRTase family.

The protein resides in the plastid. Its subcellular location is the chloroplast. The catalysed reaction is cytidine + ATP = CMP + ADP + H(+). The enzyme catalyses uridine + ATP = UMP + ADP + H(+). It participates in pyrimidine metabolism; CTP biosynthesis via salvage pathway; CTP from cytidine: step 1/3. The protein operates within pyrimidine metabolism; UMP biosynthesis via salvage pathway; UMP from uridine: step 1/1. In terms of biological role, involved in the pyrimidine salvage pathway. Phosphorylates uridine to uridine monophosphate (UMP). Phosphorylates cytidine to cytidine monophosphate (CMP). Does not possess uracil phosphoribosyltransferase (UPRTase) activity that catalyzes the conversion of uracil and 5-phospho-alpha-D-ribose 1-diphosphate (PRPP) to UMP and diphosphate. This Arabidopsis thaliana (Mouse-ear cress) protein is Uridine/cytidine kinase UKL1, chloroplastic.